The sequence spans 276 residues: Undecaprenyl-diphosphatase (276 aa).

The next 7 helical transmembrane spans lie at 1 to 21 (MSWL…FLPV), 39 to 59 (AGAS…LVYF), 84 to 104 (YWLG…GLLF), 115 to 135 (LWLV…AEYY), 188 to 208 (FGFL…LPDA), 222 to 242 (QLFV…AWFL), and 253 to 273 (FVGY…AGVV).

Belongs to the UppP family.

The protein localises to the cell membrane. The catalysed reaction is di-trans,octa-cis-undecaprenyl diphosphate + H2O = di-trans,octa-cis-undecaprenyl phosphate + phosphate + H(+). Its function is as follows. Catalyzes the dephosphorylation of undecaprenyl diphosphate (UPP). Confers resistance to bacitracin. The chain is Undecaprenyl-diphosphatase from Mycolicibacterium vanbaalenii (strain DSM 7251 / JCM 13017 / BCRC 16820 / KCTC 9966 / NRRL B-24157 / PYR-1) (Mycobacterium vanbaalenii).